A 566-amino-acid chain; its full sequence is Phenylalanine--tRNA ligase beta subunit (566 aa).

Residues 287–362 enclose the B5 domain; it reads YFQEEVEFNV…IGEGLSSFNP (76 aa). Residues Asp340, Asp346, Glu349, and Asp350 each coordinate Mg(2+).

This sequence belongs to the phenylalanyl-tRNA synthetase beta subunit family. Type 2 subfamily. In terms of assembly, tetramer of two alpha and two beta subunits. Mg(2+) serves as cofactor.

It is found in the cytoplasm. The catalysed reaction is tRNA(Phe) + L-phenylalanine + ATP = L-phenylalanyl-tRNA(Phe) + AMP + diphosphate + H(+). The protein is Phenylalanine--tRNA ligase beta subunit of Borreliella burgdorferi (strain ZS7) (Borrelia burgdorferi).